The following is a 157-amino-acid chain: 6,7-dimethyl-8-ribityllumazine synthase (157 aa).

5-amino-6-(D-ribitylamino)uracil contacts are provided by residues F22, 56 to 58, and 81 to 83; these read AFE and VLI. Residue 86-87 participates in (2S)-2-hydroxy-3-oxobutyl phosphate binding; sequence ET. H89 (proton donor) is an active-site residue. A 5-amino-6-(D-ribitylamino)uracil-binding site is contributed by F114. Position 128 (R128) interacts with (2S)-2-hydroxy-3-oxobutyl phosphate.

The protein belongs to the DMRL synthase family.

The catalysed reaction is (2S)-2-hydroxy-3-oxobutyl phosphate + 5-amino-6-(D-ribitylamino)uracil = 6,7-dimethyl-8-(1-D-ribityl)lumazine + phosphate + 2 H2O + H(+). It participates in cofactor biosynthesis; riboflavin biosynthesis; riboflavin from 2-hydroxy-3-oxobutyl phosphate and 5-amino-6-(D-ribitylamino)uracil: step 1/2. Its function is as follows. Catalyzes the formation of 6,7-dimethyl-8-ribityllumazine by condensation of 5-amino-6-(D-ribitylamino)uracil with 3,4-dihydroxy-2-butanone 4-phosphate. This is the penultimate step in the biosynthesis of riboflavin. The polypeptide is 6,7-dimethyl-8-ribityllumazine synthase (Chlamydia trachomatis serovar L2 (strain ATCC VR-902B / DSM 19102 / 434/Bu)).